The chain runs to 130 residues: Small ribosomal subunit protein uS9 (130 aa).

It belongs to the universal ribosomal protein uS9 family.

The protein is Small ribosomal subunit protein uS9 of Clostridium perfringens (strain ATCC 13124 / DSM 756 / JCM 1290 / NCIMB 6125 / NCTC 8237 / Type A).